The sequence spans 223 residues: Pyridoxine/pyridoxamine 5'-phosphate oxidase (223 aa).

Residues 9 to 12 (RVGY) and Lys76 contribute to the substrate site. Residues 71–76 (RTVLCK), 86–87 (FT), Lys93, and Gln115 each bind FMN. Substrate is bound by residues Tyr133, Arg137, and Ser141. FMN contacts are provided by residues 150–151 (QS) and Trp196. Position 202–204 (202–204 (RMH)) interacts with substrate. Arg206 is an FMN binding site.

The protein belongs to the pyridoxamine 5'-phosphate oxidase family. As to quaternary structure, homodimer. The cofactor is FMN.

The catalysed reaction is pyridoxamine 5'-phosphate + O2 + H2O = pyridoxal 5'-phosphate + H2O2 + NH4(+). It catalyses the reaction pyridoxine 5'-phosphate + O2 = pyridoxal 5'-phosphate + H2O2. The protein operates within cofactor metabolism; pyridoxal 5'-phosphate salvage; pyridoxal 5'-phosphate from pyridoxamine 5'-phosphate: step 1/1. Its pathway is cofactor metabolism; pyridoxal 5'-phosphate salvage; pyridoxal 5'-phosphate from pyridoxine 5'-phosphate: step 1/1. In terms of biological role, catalyzes the oxidation of either pyridoxine 5'-phosphate (PNP) or pyridoxamine 5'-phosphate (PMP) into pyridoxal 5'-phosphate (PLP). In Rhodococcus jostii (strain RHA1), this protein is Pyridoxine/pyridoxamine 5'-phosphate oxidase.